The following is a 384-amino-acid chain: tRNA-specific 2-thiouridylase MnmA (384 aa).

ATP-binding positions include glycine 9–serine 16 and methionine 35. Residues asparagine 95–aspartate 97 are interaction with target base in tRNA. The active-site Nucleophile is the cysteine 100. Cysteines 100 and 196 form a disulfide. Glycine 124 provides a ligand contact to ATP. The interaction with tRNA stretch occupies residues lysine 146–glutamine 148. The active-site Cysteine persulfide intermediate is cysteine 196. The interaction with tRNA stretch occupies residues arginine 308 to tyrosine 309.

It belongs to the MnmA/TRMU family.

The protein resides in the cytoplasm. It catalyses the reaction S-sulfanyl-L-cysteinyl-[protein] + uridine(34) in tRNA + AH2 + ATP = 2-thiouridine(34) in tRNA + L-cysteinyl-[protein] + A + AMP + diphosphate + H(+). Its function is as follows. Catalyzes the 2-thiolation of uridine at the wobble position (U34) of tRNA, leading to the formation of s(2)U34. The sequence is that of tRNA-specific 2-thiouridylase MnmA from Burkholderia vietnamiensis (strain G4 / LMG 22486) (Burkholderia cepacia (strain R1808)).